A 49-amino-acid polypeptide reads, in one-letter code: Photosystem II reaction center protein K (49 aa).

The propeptide occupies 1–12; that stretch reads MISSIHLRKLLG. The chain crosses the membrane as a helical span at residues 24-44; it reads IIDVLPIIPVLFLLLAFVWQA.

The protein belongs to the PsbK family. As to quaternary structure, PSII is composed of 1 copy each of membrane proteins PsbA, PsbB, PsbC, PsbD, PsbE, PsbF, PsbH, PsbI, PsbJ, PsbK, PsbL, PsbM, PsbT, PsbX, PsbY, PsbZ, Psb30/Ycf12, at least 3 peripheral proteins of the oxygen-evolving complex and a large number of cofactors. It forms dimeric complexes.

The protein localises to the plastid. It localises to the chloroplast thylakoid membrane. In terms of biological role, one of the components of the core complex of photosystem II (PSII). PSII is a light-driven water:plastoquinone oxidoreductase that uses light energy to abstract electrons from H(2)O, generating O(2) and a proton gradient subsequently used for ATP formation. It consists of a core antenna complex that captures photons, and an electron transfer chain that converts photonic excitation into a charge separation. The polypeptide is Photosystem II reaction center protein K (Phacus acuminatus).